A 198-amino-acid polypeptide reads, in one-letter code: 3-isopropylmalate dehydratase small subunit (198 aa).

It belongs to the LeuD family. LeuD type 1 subfamily. As to quaternary structure, heterodimer of LeuC and LeuD.

The enzyme catalyses (2R,3S)-3-isopropylmalate = (2S)-2-isopropylmalate. Its pathway is amino-acid biosynthesis; L-leucine biosynthesis; L-leucine from 3-methyl-2-oxobutanoate: step 2/4. In terms of biological role, catalyzes the isomerization between 2-isopropylmalate and 3-isopropylmalate, via the formation of 2-isopropylmaleate. The protein is 3-isopropylmalate dehydratase small subunit of Mycobacterium leprae (strain Br4923).